A 308-amino-acid chain; its full sequence is PAK4-inhibitor inka1 (308 aa).

Positions 81–105 are disordered; it reads EEEESASDPSAVSSPSSERSLEFDS. Residues 87–98 are compositionally biased toward low complexity; sequence SDPSAVSSPSSE. 2 inka box regions span residues 164-201 and 281-308; these read DPED…DLPE and DTDY…IGYI.

This sequence belongs to the INKA family. In terms of assembly, interacts with pak4/pak5.

The protein resides in the nucleus. It localises to the cytoplasm. Inhibitor of the serine/threonine-protein kinase pak4/pak5. Acts by binding pak4/pak5 in a substrate-like manner, inhibiting the protein kinase activity. Required for the proper migration of neural crest cells during embryonic development, probably by inhibiting pak4/pak5. This Danio rerio (Zebrafish) protein is PAK4-inhibitor inka1.